A 506-amino-acid chain; its full sequence is Histidine ammonia-lyase (506 aa).

The segment at residues 144–146 (ASG) is a cross-link (5-imidazolinone (Ala-Gly)). 2,3-didehydroalanine (Ser) is present on Ser145.

Belongs to the PAL/histidase family. In terms of processing, contains an active site 4-methylidene-imidazol-5-one (MIO), which is formed autocatalytically by cyclization and dehydration of residues Ala-Ser-Gly.

Its subcellular location is the cytoplasm. The catalysed reaction is L-histidine = trans-urocanate + NH4(+). The protein operates within amino-acid degradation; L-histidine degradation into L-glutamate; N-formimidoyl-L-glutamate from L-histidine: step 1/3. The polypeptide is Histidine ammonia-lyase (Legionella pneumophila subsp. pneumophila (strain Philadelphia 1 / ATCC 33152 / DSM 7513)).